Here is a 475-residue protein sequence, read N- to C-terminus: tRNA-2-methylthio-N(6)-dimethylallyladenosine synthase (475 aa).

Residues 1-10 show a composition bias toward basic and acidic residues; that stretch reads MHETTLKREG. The interval 1–25 is disordered; it reads MHETTLKREGASTPSNPTPSTHAAG. A compositionally biased stretch (polar residues) spans 12-23; the sequence is STPSNPTPSTHA. The 118-residue stretch at 27–144 folds into the MTTase N-terminal domain; sequence GKIYIRTFGC…LPELIRRRRD (118 aa). Residues Cys36, Cys73, Cys107, Cys181, Cys185, and Cys188 each contribute to the [4Fe-4S] cluster site. The 234-residue stretch at 167–400 folds into the Radical SAM core domain; the sequence is RVEGATAFVS…QALINEQAAA (234 aa). The 64-residue stretch at 403-466 folds into the TRAM domain; it reads QSMVGTRQRL…TNSLRGRVAG (64 aa).

Belongs to the methylthiotransferase family. MiaB subfamily. In terms of assembly, monomer. Requires [4Fe-4S] cluster as cofactor.

It localises to the cytoplasm. The catalysed reaction is N(6)-dimethylallyladenosine(37) in tRNA + (sulfur carrier)-SH + AH2 + 2 S-adenosyl-L-methionine = 2-methylsulfanyl-N(6)-dimethylallyladenosine(37) in tRNA + (sulfur carrier)-H + 5'-deoxyadenosine + L-methionine + A + S-adenosyl-L-homocysteine + 2 H(+). Functionally, catalyzes the methylthiolation of N6-(dimethylallyl)adenosine (i(6)A), leading to the formation of 2-methylthio-N6-(dimethylallyl)adenosine (ms(2)i(6)A) at position 37 in tRNAs that read codons beginning with uridine. The polypeptide is tRNA-2-methylthio-N(6)-dimethylallyladenosine synthase (Bordetella avium (strain 197N)).